The primary structure comprises 344 residues: Biotin synthase (344 aa).

The Radical SAM core domain maps to 36 to 260; it reads NQIQISTLLS…MMPTSYIRLS (225 aa). Cys51, Cys55, and Cys58 together coordinate [4Fe-4S] cluster. Cys95, Cys126, Cys186, and Arg258 together coordinate [2Fe-2S] cluster.

This sequence belongs to the radical SAM superfamily. Biotin synthase family. In terms of assembly, homodimer. [4Fe-4S] cluster is required as a cofactor. Requires [2Fe-2S] cluster as cofactor.

The catalysed reaction is (4R,5S)-dethiobiotin + (sulfur carrier)-SH + 2 reduced [2Fe-2S]-[ferredoxin] + 2 S-adenosyl-L-methionine = (sulfur carrier)-H + biotin + 2 5'-deoxyadenosine + 2 L-methionine + 2 oxidized [2Fe-2S]-[ferredoxin]. It participates in cofactor biosynthesis; biotin biosynthesis; biotin from 7,8-diaminononanoate: step 2/2. Functionally, catalyzes the conversion of dethiobiotin (DTB) to biotin by the insertion of a sulfur atom into dethiobiotin via a radical-based mechanism. In Buchnera aphidicola subsp. Baizongia pistaciae (strain Bp), this protein is Biotin synthase.